Here is a 390-residue protein sequence, read N- to C-terminus: Protein snail (390 aa).

Positions 1-20 are SNAG domain; that stretch reads MAANYKSCPLKKRPIVFVEE. Disordered regions lie at residues 29–65 and 162–191; these read ALTK…PKRD and QSVY…DLSV. 2 stretches are compositionally biased toward polar residues: residues 32-43 and 162-172; these read KDSQFAQDQPQD and QSVYSYQQMTP. 5 consecutive C2H2-type zinc fingers follow at residues 245-267, 280-302, 306-328, 334-356, and 362-385; these read FKCD…RQFH, HSCE…IRTH, CKCP…IRTH, FQCP…QQTH, and YACQ…SSNC.

Belongs to the snail C2H2-type zinc-finger protein family.

The protein localises to the nucleus. Its function is as follows. Essential for the correct specification of ventral-dorsal patterns. The protein is Protein snail (sna) of Drosophila melanogaster (Fruit fly).